Consider the following 908-residue polypeptide: Probable RNA-directed DNA polymerase from transposon X-element (908 aa).

Residues A481–L752 enclose the Reverse transcriptase domain. Residues R883–S908 are disordered.

Mg(2+) serves as cofactor. Requires Mn(2+) as cofactor.

It carries out the reaction DNA(n) + a 2'-deoxyribonucleoside 5'-triphosphate = DNA(n+1) + diphosphate. The sequence is that of Probable RNA-directed DNA polymerase from transposon X-element (X-element\ORF2) from Drosophila melanogaster (Fruit fly).